Consider the following 463-residue polypeptide: Annexin A7 (463 aa).

Over residues 1–18 (MSYPGYPPTGYPPFPGYP) the composition is skewed to pro residues. Disordered stretches follow at residues 1–34 (MSYP…QYPY) and 77–149 (SPGG…MTQG). The tract at residues 1–143 (MSYPGYPPTG…GGQAPYPSQP (143 aa)) is repeat-rich region. The 3 X 5 AA tandem repeats of G-Y-P-P-X stretch occupies residues 5–20 (GYPPTGYPPFPGYPPA). Residues 86-99 (GGQGFGAPPGGAGF) are compositionally biased toward gly residues. 4 Annexin repeats span residues 160–231 (FDAM…ALFM), 232–303 (PSTY…SMCQ), 315–387 (QMAQ…TILQ), and 391–462 (NRPA…AIVG). At Lys208 the chain carries N6-acetyllysine.

Belongs to the annexin family. As to quaternary structure, interacts with PDCD6.

Its function is as follows. Calcium/phospholipid-binding protein which promotes membrane fusion and is involved in exocytosis. This Mus musculus (Mouse) protein is Annexin A7 (Anxa7).